A 161-amino-acid polypeptide reads, in one-letter code: Anaerobic nitrite reductase HB2 (161 aa).

In terms of domain architecture, Globin spans 5 to 154 (VFTEKQEALV…LALAIKAEMK (150 aa)). Positions 38-42 (EIAPA) match the Homodimerization motif. The heme b site is built by serine 48, lysine 62, histidine 66, and histidine 101. The Homodimerization motif lies at 108–120 (DPHFEVVKEALVR).

It belongs to the plant globin family. In terms of assembly, homodimer. The cofactor is heme b.

The protein localises to the cytoplasm. Its subcellular location is the nucleus. The enzyme catalyses Fe(III)-heme b-[protein] + nitric oxide + H2O = Fe(II)-heme b-[protein] + nitrite + 2 H(+). In terms of biological role, phytoglobin that reduces nitrite to nitric oxide (NO) under anoxic conditions (e.g. during flooding or in waterlogged soil). May not function as an oxygen storage or transport protein. Has an unusually high affinity for O(2) through an hexacoordinate heme iron because of a very low dissociation constant. The sequence is that of Anaerobic nitrite reductase HB2 from Brassica napus (Rape).